The primary structure comprises 430 residues: N-acylneuraminate cytidylyltransferase A (430 aa).

Positions 1–29 are disordered; it reads MDAVNENGKRAMKDDSHGNSTSPKRRKSR. Residues 7–17 are compositionally biased toward basic and acidic residues; that stretch reads NGKRAMKDDSH. The short motif at 9-27 is the Bipartite nuclear localization signal element; that stretch reads KRAMKDDSHGNSTSPKRRK. Residues Arg-38, Asn-48, Arg-97, Ser-106, Ser-108, and Gln-129 each contribute to the substrate site. The active site involves Arg-187.

Belongs to the CMP-NeuNAc synthase family. Homotetramer.

The protein resides in the nucleus. The enzyme catalyses an N-acylneuraminate + CTP = a CMP-N-acyl-beta-neuraminate + diphosphate. Its pathway is amino-sugar metabolism; N-acetylneuraminate metabolism. In terms of biological role, catalyzes the activation of N-acetylneuraminic acid (NeuNAc) to cytidine 5'-monophosphate N-acetylneuraminic acid (CMP-NeuNAc), a substrate required for the addition of sialic acid. Also has activity towards N-glycolylneuraminic acid (Neu5Gc). Has weak activity towards 2-keto-3-deoxy-D-glycero-D-galacto-nononic acid (KDN). The chain is N-acylneuraminate cytidylyltransferase A from Danio rerio (Zebrafish).